Reading from the N-terminus, the 881-residue chain is Putative outer membrane usher protein YfcU (881 aa).

The signal sequence occupies residues 1 to 29 (MPDHSLFRLRILPWCIALAMSGSYSSVWA).

It belongs to the fimbrial export usher family.

It is found in the cell outer membrane. Part of the yfcOPQRSUV fimbrial operon. Could contribute to adhesion to various surfaces in specific environmental niches. Increases adhesion to eukaryotic T24 bladder epithelial cells in the absence of fim genes. Probably involved in the export and assembly of fimbrial subunits across the outer membrane. The polypeptide is Putative outer membrane usher protein YfcU (yfcU) (Escherichia coli (strain K12)).